We begin with the raw amino-acid sequence, 435 residues long: Aspartate aminotransferase (435 aa).

Residues tyrosine 69 and 100 to 101 (SL) contribute to the pyridoxal 5'-phosphate site. 139-141 (YDR) lines the substrate pocket. Residues asparagine 189, tyrosine 221, and 254-256 (STS) contribute to the pyridoxal 5'-phosphate site. Arginine 392 lines the substrate pocket.

Belongs to the class-I pyridoxal-phosphate-dependent aminotransferase family. It depends on pyridoxal 5'-phosphate as a cofactor.

It carries out the reaction L-aspartate + 2-oxoglutarate = oxaloacetate + L-glutamate. In terms of biological role, main aspartate aminotransferase that couples nitrogen assimilation to aspartate synthesis. Has a weak, but significant, side activity toward kynurenine (Kyn). Oxaloacetate and 2-oxoglutarate, but not pyruvate, serve as amino acceptors, while Asp, Glu and Kyn serve as the best amino donors. Essential for axenic growth and survival of M.tuberculosis in macrophages and in mice. In Mycobacterium tuberculosis (strain ATCC 25618 / H37Rv), this protein is Aspartate aminotransferase.